We begin with the raw amino-acid sequence, 396 residues long: Na(+)/H(+) antiporter NhaA 2 (396 aa).

The next 11 membrane-spanning stretches (helical) occupy residues Leu17–Phe37, Leu62–Ile82, Ser98–Leu118, Gly125–Gly145, Leu154–Phe174, Leu179–Tyr199, Ile209–Ala229, Phe268–Phe288, Leu296–Phe316, Ile337–Leu357, and Val368–Ile388.

The protein belongs to the NhaA Na(+)/H(+) (TC 2.A.33) antiporter family.

Its subcellular location is the cell inner membrane. The enzyme catalyses Na(+)(in) + 2 H(+)(out) = Na(+)(out) + 2 H(+)(in). Its function is as follows. Na(+)/H(+) antiporter that extrudes sodium in exchange for external protons. The protein is Na(+)/H(+) antiporter NhaA 2 of Aliarcobacter butzleri (strain RM4018) (Arcobacter butzleri).